A 485-amino-acid chain; its full sequence is E3 ubiquitin-protein ligase RNF8 (485 aa).

The 55-residue stretch at 38–92 (VTVGRGFGVTYQLVSKICPLMISRNHCVLKQNPEGQWTIMDNKSLNGVWLNRARL) folds into the FHA domain. The segment at 68–72 (QNPEG) is required for interaction with PIWIL1. Position 157 is a phosphoserine (Ser157). The interval 181–220 (CESGQPVKSQGKGEVASTPSDNLDPKLTALEPSKTTGAPI) is disordered. An RING-type zinc finger spans residues 403–441 (CIICSEYFIEAVTLNCAHSFCSYCINEWMKRKIECPICR).

This sequence belongs to the RNF8 family. As to quaternary structure, homodimer. Forms a E2-E3 ubiquitin ligase complex composed of the RNF8 homodimer and a E2 heterodimer of UBE2N and UBE2V2. Interacts with class III E2s, including UBE2E1, UBE2E2, and UBE2E3 and with UBE2N. Interacts with RXRA. Interacts (via FHA domain) with ATM-phosphorylated MDC1. Interacts (via FHA domain) with 'Thr-4827' phosphorylated HERC2 (via C-terminus). Interacts with PIWIL1; leading to sequester RNF8 in the cytoplasm. Interacts with WRAP53/TCAB1. In terms of assembly, (Microbial infection) Interacts (via FHA domain) with phosphorylated human herpesvirus 1 ICP0 protein; leading to RNF8 degradation by the proteasome. Post-translationally, autoubiquitinated through 'Lys-48' and 'Lys-63' of ubiquitin. 'Lys-63' polyubiquitination is mediated by UBE2N. 'Lys-29'-type polyubiquitination is also observed, but it doesn't require its own functional RING-type zinc finger. In terms of tissue distribution, ubiquitous. In fetal tissues, highest expression in brain, thymus and liver. In adult tissues, highest levels in brain and testis, lowest levels in peripheral blood cells.

The protein resides in the nucleus. It is found in the cytoplasm. It localises to the midbody. Its subcellular location is the chromosome. The protein localises to the telomere. It carries out the reaction S-ubiquitinyl-[E2 ubiquitin-conjugating enzyme]-L-cysteine + [acceptor protein]-L-lysine = [E2 ubiquitin-conjugating enzyme]-L-cysteine + N(6)-ubiquitinyl-[acceptor protein]-L-lysine.. The protein operates within protein modification; protein ubiquitination. In terms of biological role, E3 ubiquitin-protein ligase that plays a key role in DNA damage signaling via 2 distinct roles: by mediating the 'Lys-63'-linked ubiquitination of histones H2A and H2AX and promoting the recruitment of DNA repair proteins at double-strand breaks (DSBs) sites, and by catalyzing 'Lys-48'-linked ubiquitination to remove target proteins from DNA damage sites. Following DNA DSBs, it is recruited to the sites of damage by ATM-phosphorylated MDC1 and catalyzes the 'Lys-63'-linked ubiquitination of histones H2A and H2AX, thereby promoting the formation of TP53BP1 and BRCA1 ionizing radiation-induced foci (IRIF). Also controls the recruitment of UIMC1-BRCC3 (RAP80-BRCC36) and PAXIP1/PTIP to DNA damage sites. Promotes the recruitment of NBN to DNA damage sites by catalyzing 'Lys-6'-linked ubiquitination of NBN. Also recruited at DNA interstrand cross-links (ICLs) sites and catalyzes 'Lys-63'-linked ubiquitination of histones H2A and H2AX, leading to recruitment of FAAP20/C1orf86 and Fanconi anemia (FA) complex, followed by interstrand cross-link repair. H2A ubiquitination also mediates the ATM-dependent transcriptional silencing at regions flanking DSBs in cis, a mechanism to avoid collision between transcription and repair intermediates. Promotes the formation of 'Lys-63'-linked polyubiquitin chains via interactions with the specific ubiquitin-conjugating UBE2N/UBC13 and ubiquitinates non-histone substrates such as PCNA. Substrates that are polyubiquitinated at 'Lys-63' are usually not targeted for degradation. Also catalyzes the formation of 'Lys-48'-linked polyubiquitin chains via interaction with the ubiquitin-conjugating UBE2L6/UBCH8, leading to degradation of substrate proteins such as CHEK2, JMJD2A/KDM4A and KU80/XRCC5: it is still unclear how the preference toward 'Lys-48'- versus 'Lys-63'-linked ubiquitination is regulated but it could be due to RNF8 ability to interact with specific E2 specific ligases. For instance, interaction with phosphorylated HERC2 promotes the association between RNF8 and UBE2N/UBC13 and favors the specific formation of 'Lys-63'-linked ubiquitin chains. Promotes non-homologous end joining (NHEJ) by promoting the 'Lys-48'-linked ubiquitination and degradation the of KU80/XRCC5. Following DNA damage, mediates the ubiquitination and degradation of JMJD2A/KDM4A in collaboration with RNF168, leading to unmask H4K20me2 mark and promote the recruitment of TP53BP1 at DNA damage sites. Following DNA damage, mediates the ubiquitination and degradation of POLD4/p12, a subunit of DNA polymerase delta. In the absence of POLD4, DNA polymerase delta complex exhibits higher proofreading activity. In addition to its function in damage signaling, also plays a role in higher-order chromatin structure by mediating extensive chromatin decondensation. Involved in the activation of ATM by promoting histone H2B ubiquitination, which indirectly triggers histone H4 'Lys-16' acetylation (H4K16ac), establishing a chromatin environment that promotes efficient activation of ATM kinase. Required in the testis, where it plays a role in the replacement of histones during spermatogenesis. At uncapped telomeres, promotes the joining of deprotected chromosome ends by inducing H2A ubiquitination and TP53BP1 recruitment, suggesting that it may enhance cancer development by aggravating telomere-induced genome instability in case of telomeric crisis. Promotes the assembly of RAD51 at DNA DSBs in the absence of BRCA1 and TP53BP1 Also involved in class switch recombination in immune system, via its role in regulation of DSBs repair. May be required for proper exit from mitosis after spindle checkpoint activation and may regulate cytokinesis. May play a role in the regulation of RXRA-mediated transcriptional activity. Not involved in RXRA ubiquitination by UBE2E2. In Homo sapiens (Human), this protein is E3 ubiquitin-protein ligase RNF8.